The following is a 119-amino-acid chain: Small ribosomal subunit protein uS10 (119 aa).

Alanine 2 bears the N-acetylalanine mark. Residue lysine 4 forms a Glycyl lysine isopeptide (Lys-Gly) (interchain with G-Cter in ubiquitin) linkage. The residue at position 8 (lysine 8) is an N6-succinyllysine; alternate. Lysine 8 is covalently cross-linked (Glycyl lysine isopeptide (Lys-Gly) (interchain with G-Cter in ubiquitin); alternate). At threonine 9 the chain carries Phosphothreonine. Residues lysine 34 and lysine 75 each carry the N6-acetyllysine modification. Phosphoserine is present on serine 93.

Belongs to the universal ribosomal protein uS10 family. In terms of assembly, component of the 40S small ribosomal subunit. Post-translationally, polyubiquitinated by ZNF598 via 'Lys-63'-linked ubiquitin chains when a ribosome has stalled, initiating the ribosome quality control (RQC) pathway to degrade the potentially detrimental aberrant nascent polypeptide. Deubiquitinated by OTUD3 and USP21, antagonizing ZNF598 activity. Ufmylated by UFL1.

The protein localises to the cytoplasm. Functionally, component of the small ribosomal subunit. The ribosome is a large ribonucleoprotein complex responsible for the synthesis of proteins in the cell. The polypeptide is Small ribosomal subunit protein uS10 (RPS20) (Sus scrofa (Pig)).